Consider the following 301-residue polypeptide: Ribosomal RNA small subunit methyltransferase H (301 aa).

Residues 35-37 (GGH), aspartate 55, phenylalanine 84, aspartate 105, and glutamine 112 contribute to the S-adenosyl-L-methionine site.

Belongs to the methyltransferase superfamily. RsmH family.

The protein resides in the cytoplasm. It carries out the reaction cytidine(1402) in 16S rRNA + S-adenosyl-L-methionine = N(4)-methylcytidine(1402) in 16S rRNA + S-adenosyl-L-homocysteine + H(+). Specifically methylates the N4 position of cytidine in position 1402 (C1402) of 16S rRNA. The sequence is that of Ribosomal RNA small subunit methyltransferase H from Chloroflexus aurantiacus (strain ATCC 29366 / DSM 635 / J-10-fl).